Reading from the N-terminus, the 82-residue chain is Small ribosomal subunit protein bS16 (82 aa).

This sequence belongs to the bacterial ribosomal protein bS16 family.

The polypeptide is Small ribosomal subunit protein bS16 (Aeromonas salmonicida (strain A449)).